The sequence spans 395 residues: Trans-2-enoyl-CoA reductase [NADH] (395 aa).

Residues 47–52, 73–74, 110–111, and 138–139 contribute to the NAD(+) site; these read GASTGY, FE, DA, and LA. Residue Y224 coordinates substrate. The Proton donor role is filled by Y234. Residues K243 and 272–274 contribute to the NAD(+) site; that span reads VVT.

It belongs to the TER reductase family. In terms of assembly, monomer.

The catalysed reaction is a 2,3-saturated acyl-CoA + NAD(+) = a (2E)-enoyl-CoA + NADH + H(+). It participates in lipid metabolism; fatty acid biosynthesis. Its function is as follows. Involved in the fatty acid synthesis (FAS II). Catalyzes the reduction of a carbon-carbon double bond in an enoyl moiety that is covalently linked to a coenzyme A (CoA). The protein is Trans-2-enoyl-CoA reductase [NADH] of Ruminiclostridium cellulolyticum (strain ATCC 35319 / DSM 5812 / JCM 6584 / H10) (Clostridium cellulolyticum).